The chain runs to 700 residues: Lutropin-choriogonadotropic hormone receptor (700 aa).

Residues 1–26 (MGRRVPALRQLLVLAMLVLKQSQLHS) form the signal peptide. The Extracellular portion of the chain corresponds to 27–362 (PELSGSRCPE…AFNPCEDIMG (336 aa)). One copy of the LRR 1 repeat lies at 52–75 (RAGLARLSLTYLPVKVIPSQAFRG). N-linked (GlcNAc...) asparagine glycosylation occurs at asparagine 103. LRR repeat units follow at residues 126–150 (LPRL…KISS), 176–200 (MNNE…AFNG), and 225–248 (ATGP…GLES). 2 N-linked (GlcNAc...) asparagine glycosylation sites follow: asparagine 178 and asparagine 199. Asparagine 295, asparagine 303, and asparagine 317 each carry an N-linked (GlcNAc...) asparagine glycan. Tyrosine 335 carries the post-translational modification Sulfotyrosine. Residues 363–390 (YAFLRVLIWLINILAIFGNLTVLFVLLT) traverse the membrane as a helical segment. Residues 391 to 399 (SRYKLTVPR) are Cytoplasmic-facing. The helical transmembrane segment at 400–422 (FLMCNLSFADFCMGLYLLLIASV) threads the bilayer. Residues 423 to 443 (DSQTKGQYYNHAIDWQTGSGC) lie on the Extracellular side of the membrane. A disulfide bridge connects residues cysteine 443 and cysteine 518. Residues 444–466 (SAAGFFTVFASELSVYTLTVITL) form a helical membrane-spanning segment. Residues 467–486 (ERWHTITYAVQLDQKLRLRH) lie on the Cytoplasmic side of the membrane. A helical membrane pass occupies residues 487–509 (AIPIMLGGWIFSTLMATLPLVGV). At 510 to 529 (SSYMKVSICLPMDVESTLSQ) the chain is on the extracellular side. The helical transmembrane segment at 530–551 (VYILSILLLNAVAFVVICACYV) threads the bilayer. The Cytoplasmic portion of the chain corresponds to 552–574 (RIYFAVQNPELTAPNKDTKIAKK). The chain crosses the membrane as a helical span at residues 575–598 (MAILIFTDFTCMAPISFFAISAAF). The Extracellular segment spans residues 599 to 609 (KVPLITVTNSK). The chain crosses the membrane as a helical span at residues 610–631 (VLLVLFYPVNSCANPFLYAVFT). Residues 632-700 (KAFQRDFFLL…QPTPPRVLIQ (69 aa)) lie on the Cytoplasmic side of the membrane. Residues cysteine 647 and cysteine 648 are each lipidated (S-palmitoyl cysteine).

This sequence belongs to the G-protein coupled receptor 1 family. FSH/LSH/TSH subfamily. In terms of processing, sulfated.

The protein localises to the cell membrane. Its function is as follows. Receptor for lutropin-choriogonadotropic hormone. The activity of this receptor is mediated by G proteins which activate adenylate cyclase. The chain is Lutropin-choriogonadotropic hormone receptor (Lhcgr) from Mus musculus (Mouse).